The chain runs to 319 residues: L-galactose dehydrogenase (319 aa).

Y59 acts as the Proton donor in catalysis. The 148-residue stretch at 122-269 folds into the SIS domain; it reads HCHDIEFGSL…ANKEISSVLV (148 aa). H124 is a binding site for substrate.

This sequence belongs to the aldo/keto reductase family.

It carries out the reaction L-galactose + NAD(+) = L-galactono-1,4-lactone + NADH + H(+). Functionally, catalyzes the oxidation of L-galactose to L-galactono-1,4-lactone in the presence of NAD(+). Uses NAD(+) as a hydrogen acceptor much more efficiently than NADP(+). The chain is L-galactose dehydrogenase (LGALDH) from Arabidopsis thaliana (Mouse-ear cress).